The chain runs to 902 residues: Zinc finger CCCH-type antiviral protein 1 (902 aa).

An N-acetylalanine modification is found at alanine 2. Positions 2–254 (ADPEVCCFIT…ARSKSRDRFF (253 aa)) are N-terminal domain. Residues 69 to 76 (RARVCRRK) carry the Nuclear localization signal motif. C3H1-type zinc fingers lie at residues 73–86 (CRRK…DNLH), 88–110 (CKLN…KYSH), 150–172 (CKSY…SRLH), and 169–193 (SRLH…SHNL). A disordered region spans residues 221–251 (SKHMQKNPPGPRAPSSHRRNMAYRARSKSRD). A binding to EXOSC5 region spans residues 224-254 (MQKNPPGPRAPSSHRRNMAYRARSKSRDRFF). Residues 235 to 247 (SSHRRNMAYRARS) show a composition bias toward basic residues. Phosphoserine; by GSK3-beta is present on residues serine 257, serine 263, serine 267, and serine 271. Residues 265 to 278 (SASAERSCTPSPDQ) show a composition bias toward polar residues. Disordered stretches follow at residues 265–287 (SASA…SLED) and 299–373 (YLGS…GARR). Phosphothreonine is present on threonine 273. Phosphoserine occurs at positions 275 and 284. A Nuclear export signal motif is present at residues 285-292 (LEDAPVDD). Phosphoserine is present on residues serine 302, serine 327, serine 335, serine 355, serine 378, and serine 387. Composition is skewed to polar residues over residues 310–336 (SGSS…NGSQ) and 344–369 (PGST…TNDQ). Threonine 393 bears the Phosphothreonine mark. Phosphoserine is present on residues serine 407, serine 469, serine 492, and serine 494. The tract at residues 445–481 (LNYKSTSSGHREISSPRIQDAGPASRDVQATGRIADD) is disordered. Threonine 554 carries the post-translational modification Phosphothreonine. Phosphoserine occurs at positions 572 and 590. Positions 594-681 (SVTKPANSVF…ASKTQKDVIR (88 aa)) constitute a WWE domain. The region spanning 716-902 (PQEDFCFLSS…YTEDKACVIS (187 aa)) is the PARP catalytic domain.

It belongs to the ARTD/PARP family. Homodimer or homooligomer. Homooligomerization is essential for its antiviral activity. Interacts with EXOSC5. Interacts (via N-terminal domain) with DDX17 in an RNA-independent manner. Interacts with EXOSC3, EXOSC7, DCP2 and DCP1A. Interacts with PARN in an RNA-independent manner. Interacts with XRN1 in an RNA-dependent manner. Isoform 2 interacts (via zinc-fingers) with RIGI in an RNA-dependent manner. Interacts (via N-terminal domain) with DHX30 (via N-terminus) in an RNA-independent manner. Phosphorylation at Ser-275 is essential for sequential phosphorylation of Ser-271, Ser-267, Ser-263 and Ser-257 by GSK3-beta. Phosphorylation by GSK3-beta enhances its antiviral activity.

Its subcellular location is the cytoplasm. It is found in the nucleus. Antiviral protein which inhibits the replication of viruses by recruiting the cellular RNA degradation machineries to degrade the viral mRNAs. Binds to a ZAP-responsive element (ZRE) present in the target viral mRNA, recruits cellular poly(A)-specific ribonuclease PARN to remove the poly(A) tail, and the 3'-5' exoribonuclease complex exosome to degrade the RNA body from the 3'-end. It also recruits the decapping complex DCP1-DCP2 through RNA helicase p72 (DDX17) to remove the cap structure of the viral mRNA to initiate its degradation from the 5'-end. Its target viruses belong to families which include retroviridae: human immunodeficiency virus type 1 (HIV-1), moloney and murine leukemia virus (MoMLV) and xenotropic MuLV-related virus (XMRV), filoviridae: ebola virus (EBOV) and marburg virus (MARV), togaviridae: sindbis virus (SINV) and Ross river virus (RRV). Specifically targets the multiply spliced but not unspliced or singly spliced HIV-1 mRNAs for degradation. Isoform 1 is a more potent viral inhibitor than isoform 2. Isoform 2 acts as a positive regulator of RIGI signaling resulting in activation of the downstream effector IRF3 leading to the expression of type I IFNs and IFN stimulated genes (ISGs). The sequence is that of Zinc finger CCCH-type antiviral protein 1 from Homo sapiens (Human).